The sequence spans 467 residues: uncharacterized protein (467 aa).

Positions 416–467 (KQQRAQTAVVGTTKELVSKATHMKPPRTPPGEAEHRKRSQSLAICQWNKNSR) are disordered. Residues 455 to 467 (QSLAICQWNKNSR) are compositionally biased toward polar residues.

This is an uncharacterized protein from Homo sapiens (Human).